We begin with the raw amino-acid sequence, 320 residues long: Cytochrome f (320 aa).

The N-terminal stretch at 1–35 (MENRNTFSWVKEQITRSISVSIMIYVITRTSISNA) is a signal peptide. Residues tyrosine 36, cysteine 56, cysteine 59, and histidine 60 each contribute to the heme site. The helical transmembrane segment at 286–305 (VQGLLFFFASVILAQVFLVL) threads the bilayer.

Belongs to the cytochrome f family. In terms of assembly, the 4 large subunits of the cytochrome b6-f complex are cytochrome b6, subunit IV (17 kDa polypeptide, petD), cytochrome f and the Rieske protein, while the 4 small subunits are PetG, PetL, PetM and PetN. The complex functions as a dimer. The cofactor is heme.

The protein resides in the plastid. It localises to the chloroplast thylakoid membrane. Functionally, component of the cytochrome b6-f complex, which mediates electron transfer between photosystem II (PSII) and photosystem I (PSI), cyclic electron flow around PSI, and state transitions. This Triticum aestivum (Wheat) protein is Cytochrome f (petA).